Here is a 444-residue protein sequence, read N- to C-terminus: ATP-dependent RNA helicase SrmB (444 aa).

A Q motif motif is present at residues 4–32 (TTFSELELDESLLEALQDKGFTRPTAIQA). One can recognise a Helicase ATP-binding domain in the interval 35–209 (IPPALDGRDV…AERLLEDPVE (175 aa)). 48–55 (APTGTGKT) is an ATP binding site. Residues 157–160 (DEAD) carry the DEAD box motif. One can recognise a Helicase C-terminal domain in the interval 238 to 387 (LLVHLLKQPE…ELRPKTRAPS (150 aa)). The segment covering 382-391 (KTRAPSEKQT) has biased composition (basic and acidic residues). The segment at 382–444 (KTRAPSEKQT…TGVPPQTTEE (63 aa)) is disordered. 2 stretches are compositionally biased toward basic residues: residues 394–406 (PSKK…AEKK) and 414–432 (PRVK…RRKP).

The protein belongs to the DEAD box helicase family. SrmB subfamily. In terms of assembly, interacts with the 50S ribosomal subunit. Forms a complex with the 50S ribosomal proteins L4 and L24, and a region near the 5'-end of 23S rRNA.

The protein localises to the cytoplasm. The catalysed reaction is ATP + H2O = ADP + phosphate + H(+). Its function is as follows. DEAD-box RNA helicase involved in the assembly of the 50S ribosomal subunit at low temperature. Exhibits RNA-stimulated ATP hydrolysis and RNA unwinding activity. Acts before DeaD. The polypeptide is ATP-dependent RNA helicase SrmB (Escherichia coli (strain K12)).